The primary structure comprises 64 residues: Defensin-like protein 123 (64 aa).

Disulfide bonds link Cys-19–Cys-62, Cys-29–Cys-49, Cys-34–Cys-56, and Cys-38–Cys-58.

It belongs to the DEFL family.

This is Defensin-like protein 123 from Arabidopsis thaliana (Mouse-ear cress).